Reading from the N-terminus, the 61-residue chain is Small ribosomal subunit protein uS14 (61 aa).

4 residues coordinate Zn(2+): Cys24, Cys27, Cys40, and Cys43.

Belongs to the universal ribosomal protein uS14 family. Zinc-binding uS14 subfamily. As to quaternary structure, part of the 30S ribosomal subunit. Contacts proteins S3 and S10. It depends on Zn(2+) as a cofactor.

In terms of biological role, binds 16S rRNA, required for the assembly of 30S particles and may also be responsible for determining the conformation of the 16S rRNA at the A site. The sequence is that of Small ribosomal subunit protein uS14 from Malacoplasma penetrans (strain HF-2) (Mycoplasma penetrans).